Consider the following 167-residue polypeptide: Large ribosomal subunit protein uL10 (167 aa).

This sequence belongs to the universal ribosomal protein uL10 family. In terms of assembly, part of the ribosomal stalk of the 50S ribosomal subunit. The N-terminus interacts with L11 and the large rRNA to form the base of the stalk. The C-terminus forms an elongated spine to which L12 dimers bind in a sequential fashion forming a multimeric L10(L12)X complex.

Its function is as follows. Forms part of the ribosomal stalk, playing a central role in the interaction of the ribosome with GTP-bound translation factors. This chain is Large ribosomal subunit protein uL10, found in Psychromonas ingrahamii (strain DSM 17664 / CCUG 51855 / 37).